A 579-amino-acid chain; its full sequence is Laccase-24 (579 aa).

Residues 1-23 (MARSWSLLLLPFALALVASVAQA) form the signal peptide. Plastocyanin-like domains follow at residues 31-148 (NVGN…PRGG) and 159-322 (EEVV…YGGG). Asparagine 34 and asparagine 78 each carry an N-linked (GlcNAc...) asparagine glycan. Residues histidine 82 and histidine 84 each coordinate Cu cation. N-linked (GlcNAc...) asparagine glycans are attached at residues asparagine 110 and asparagine 116. Positions 127 and 129 each coordinate Cu cation. 11 N-linked (GlcNAc...) asparagine glycosylation sites follow: asparagine 204, asparagine 209, asparagine 219, asparagine 241, asparagine 312, asparagine 337, asparagine 348, asparagine 398, asparagine 405, asparagine 444, and asparagine 462. Positions 425–563 (DFPDTPPIVF…GMVFEVQNGP (139 aa)) constitute a Plastocyanin-like 3 domain. Residues histidine 480, histidine 483, and histidine 485 each coordinate Cu cation. Asparagine 500 carries an N-linked (GlcNAc...) asparagine glycan. Positions 542, 543, 544, and 548 each coordinate Cu cation.

This sequence belongs to the multicopper oxidase family. It depends on Cu cation as a cofactor.

The protein resides in the secreted. Its subcellular location is the extracellular space. The protein localises to the apoplast. It catalyses the reaction 4 hydroquinone + O2 = 4 benzosemiquinone + 2 H2O. Lignin degradation and detoxification of lignin-derived products. The chain is Laccase-24 (LAC24) from Oryza sativa subsp. japonica (Rice).